A 234-amino-acid polypeptide reads, in one-letter code: 2,3,4,5-tetrahydropyridine-2,6-dicarboxylate N-acetyltransferase (234 aa).

Belongs to the transferase hexapeptide repeat family. DapH subfamily.

The enzyme catalyses (S)-2,3,4,5-tetrahydrodipicolinate + acetyl-CoA + H2O = L-2-acetamido-6-oxoheptanedioate + CoA. The protein operates within amino-acid biosynthesis; L-lysine biosynthesis via DAP pathway; LL-2,6-diaminopimelate from (S)-tetrahydrodipicolinate (acetylase route): step 1/3. In terms of biological role, catalyzes the transfer of an acetyl group from acetyl-CoA to tetrahydrodipicolinate. In Lacticaseibacillus paracasei (strain ATCC 334 / BCRC 17002 / CCUG 31169 / CIP 107868 / KCTC 3260 / NRRL B-441) (Lactobacillus paracasei), this protein is 2,3,4,5-tetrahydropyridine-2,6-dicarboxylate N-acetyltransferase.